A 1361-amino-acid chain; its full sequence is Cell migration-inducing and hyaluronan-binding protein (1361 aa).

An N-terminal signal peptide occupies residues 1-30 (MGAAGRQDFLFKAMLTISWLTLTCFPGATS). The G8 domain maps to 44–166 (QPWNPGHDQD…KKLSWTFLNK (123 aa)). Residues N119, N165, N312, N370, and N420 are each glycosylated (N-linked (GlcNAc...) asparagine). The region spanning 176–317 (GGYFFERSWG…GEYFNVSLSS (142 aa)) is the GG-type lectin 1 domain. Positions 295 to 591 (AAARVFKLFQ…IHHTFSRCVT (297 aa)) are necessary for its endoplasmic reticulum (ER) retention and interaction with HSPA5. PbH1 repeat units lie at residues 572–594 (DPPT…TVHG), 595–617 (SNGL…FTED), 719–741 (IPLG…IIDN), and 798–819 (GGDV…TLAS). N889 and N921 each carry an N-linked (GlcNAc...) asparagine glycan. One can recognise a GG-type lectin 2 domain in the interval 1227-1361 (NDFAYIEVDG…PIPVVKKKKL (135 aa)).

This sequence belongs to the CEMIP family. As to quaternary structure, interacts with EPHA2 and ITPR3. Interacts with HSPA5/BIP; the interaction induces calcium leakage from the endoplasmic reticulum and cell migration. Interacts with clathrin heavy chain/CLTC. Post-translationally, N-glycosylated; glycosylation is not necessary for HA-binding. As to expression, expressed in dermal and in synovial fibroblasts. Strongly expressed in gastric cancers compared with the paired normal tissues. Strongly expressed in both ductal carcinoma and invasive breast cancer cells compared with benign epithelial cells (at protein level). Strongly expressed in brain, placenta, prostate, breast, lung and testis. Expressed in fibroblasts, epithelial cells and cancer cells. In ear, it is specifically expressed in inner ear. Expressed in cochlea and vestibule tissues. Strongly expressed in gastric cancers compared with the paired normal tissues. Strongly expressed in colon adenocarcinomas compared with normal colonic mucosas. Strongly expressed in breast cancer as compared to normal breast tissue.

The protein localises to the nucleus. The protein resides in the cytoplasm. Its subcellular location is the endoplasmic reticulum. It localises to the cell membrane. It is found in the membrane. The protein localises to the clathrin-coated pit. The protein resides in the secreted. The enzyme catalyses Random hydrolysis of (1-&gt;4)-linkages between N-acetyl-beta-D-glucosamine and D-glucuronate residues in hyaluronate.. Activity is up-regulated by histamine. Its function is as follows. Mediates depolymerization of hyaluronic acid (HA) via the cell membrane-associated clathrin-coated pit endocytic pathway. Binds to hyaluronic acid. Hydrolyzes high molecular weight hyaluronic acid to produce an intermediate-sized product, a process that may occur through rapid vesicle endocytosis and recycling without intracytoplasmic accumulation or digestion in lysosomes. Involved in hyaluronan catabolism in the dermis of the skin and arthritic synovium. Positively regulates epithelial-mesenchymal transition (EMT), and hence tumor cell growth, invasion and cancer dissemination. In collaboration with HSPA5/BIP, promotes cancer cell migration in a calcium and PKC-dependent manner. May be involved in hearing. In Homo sapiens (Human), this protein is Cell migration-inducing and hyaluronan-binding protein.